Reading from the N-terminus, the 42-residue chain is Large ribosomal subunit protein bL36 (42 aa).

It belongs to the bacterial ribosomal protein bL36 family.

The polypeptide is Large ribosomal subunit protein bL36 (Wolbachia pipientis wMel).